A 207-amino-acid chain; its full sequence is Guanylate kinase (207 aa).

Positions 6 to 185 constitute a Guanylate kinase-like domain; that stretch reads GLLIVLSGPS…AKNRIQCIVE (180 aa). An ATP-binding site is contributed by 13–20; that stretch reads GPSGVGKG.

Belongs to the guanylate kinase family.

The protein localises to the cytoplasm. The catalysed reaction is GMP + ATP = GDP + ADP. Its function is as follows. Essential for recycling GMP and indirectly, cGMP. This is Guanylate kinase from Staphylococcus aureus (strain bovine RF122 / ET3-1).